A 293-amino-acid chain; its full sequence is Bifunctional protein FolD 1 (293 aa).

NADP(+)-binding positions include 174 to 176 and T240; that span reads GRS.

This sequence belongs to the tetrahydrofolate dehydrogenase/cyclohydrolase family. Homodimer.

The catalysed reaction is (6R)-5,10-methylene-5,6,7,8-tetrahydrofolate + NADP(+) = (6R)-5,10-methenyltetrahydrofolate + NADPH. It catalyses the reaction (6R)-5,10-methenyltetrahydrofolate + H2O = (6R)-10-formyltetrahydrofolate + H(+). Its pathway is one-carbon metabolism; tetrahydrofolate interconversion. Its function is as follows. Catalyzes the oxidation of 5,10-methylenetetrahydrofolate to 5,10-methenyltetrahydrofolate and then the hydrolysis of 5,10-methenyltetrahydrofolate to 10-formyltetrahydrofolate. The polypeptide is Bifunctional protein FolD 1 (Saccharopolyspora erythraea (strain ATCC 11635 / DSM 40517 / JCM 4748 / NBRC 13426 / NCIMB 8594 / NRRL 2338)).